Consider the following 120-residue polypeptide: Phosphoribosyl-AMP cyclohydrolase (120 aa).

Residue aspartate 74 coordinates Mg(2+). Residue cysteine 75 participates in Zn(2+) binding. Mg(2+)-binding residues include aspartate 76 and aspartate 78. Residues cysteine 91 and cysteine 98 each contribute to the Zn(2+) site.

It belongs to the PRA-CH family. Homodimer. Mg(2+) is required as a cofactor. Requires Zn(2+) as cofactor.

The protein resides in the cytoplasm. The enzyme catalyses 1-(5-phospho-beta-D-ribosyl)-5'-AMP + H2O = 1-(5-phospho-beta-D-ribosyl)-5-[(5-phospho-beta-D-ribosylamino)methylideneamino]imidazole-4-carboxamide. It participates in amino-acid biosynthesis; L-histidine biosynthesis; L-histidine from 5-phospho-alpha-D-ribose 1-diphosphate: step 3/9. Catalyzes the hydrolysis of the adenine ring of phosphoribosyl-AMP. This is Phosphoribosyl-AMP cyclohydrolase from Natronomonas pharaonis (strain ATCC 35678 / DSM 2160 / CIP 103997 / JCM 8858 / NBRC 14720 / NCIMB 2260 / Gabara) (Halobacterium pharaonis).